The primary structure comprises 203 residues: Excretory canal abnormal exc-13 (203 aa).

The N-terminal stretch at 1–20 (MIGFLKFALIGTVLLGVANG) is a signal peptide. N-linked (GlcNAc...) asparagine glycans are attached at residues asparagine 32, asparagine 84, and asparagine 188.

This sequence belongs to the UPF0376 family.

Its subcellular location is the secreted. In Caenorhabditis elegans, this protein is Excretory canal abnormal exc-13.